The following is a 250-amino-acid chain: ATP synthase subunit a (250 aa).

A run of 6 helical transmembrane segments spans residues alanine 29–serine 49, phenylalanine 84–phenylalanine 104, isoleucine 114–tyrosine 134, valine 143–isoleucine 163, phenylalanine 193–isoleucine 213, and valine 216–leucine 236.

This sequence belongs to the ATPase A chain family. In terms of assembly, F-type ATPases have 2 components, CF(1) - the catalytic core - and CF(0) - the membrane proton channel. CF(1) has five subunits: alpha(3), beta(3), gamma(1), delta(1), epsilon(1). CF(0) has three main subunits: a(1), b(2) and c(9-12). The alpha and beta chains form an alternating ring which encloses part of the gamma chain. CF(1) is attached to CF(0) by a central stalk formed by the gamma and epsilon chains, while a peripheral stalk is formed by the delta and b chains.

The protein resides in the cell inner membrane. In terms of biological role, key component of the proton channel; it plays a direct role in the translocation of protons across the membrane. The polypeptide is ATP synthase subunit a (Rhizobium etli (strain CIAT 652)).